The sequence spans 289 residues: Glucose and ribitol dehydrogenase homolog 2 (289 aa).

A disordered region spans residues 1-32 (MASGFPPQKQETQPGIQHVMEPTPEFSSSNYK). 43-67 (LVTGGDSGIGKAVCHCYALEGASVA) is a binding site for NAD(+). A substrate-binding site is contributed by serine 180. Catalysis depends on tyrosine 193, which acts as the Proton acceptor.

It belongs to the short-chain dehydrogenases/reductases (SDR) family.

Functionally, may act as a short alcohol-polyol-sugar dehydrogenase possibly related to carbohydrate metabolism and the acquisition of desiccation tolerance. May also be involved in signal transduction. The polypeptide is Glucose and ribitol dehydrogenase homolog 2 (Arabidopsis thaliana (Mouse-ear cress)).